We begin with the raw amino-acid sequence, 474 residues long: Glutamate--tRNA ligase 1 (474 aa).

Residues 10–20 (PSPTGFLHIGG) carry the 'HIGH' region motif. A 'KMSKS' region motif is present at residues 239 to 243 (KLSKR). Lys-242 is a binding site for ATP.

Belongs to the class-I aminoacyl-tRNA synthetase family. Glutamate--tRNA ligase type 1 subfamily. Monomer.

Its subcellular location is the cytoplasm. It catalyses the reaction tRNA(Glu) + L-glutamate + ATP = L-glutamyl-tRNA(Glu) + AMP + diphosphate. Functionally, catalyzes the attachment of glutamate to tRNA(Glu) in a two-step reaction: glutamate is first activated by ATP to form Glu-AMP and then transferred to the acceptor end of tRNA(Glu). This chain is Glutamate--tRNA ligase 1, found in Methylobacterium sp. (strain 4-46).